We begin with the raw amino-acid sequence, 234 residues long: UPF0173 metal-dependent hydrolase RHE_CH01853 (234 aa).

This sequence belongs to the UPF0173 family.

This Rhizobium etli (strain ATCC 51251 / DSM 11541 / JCM 21823 / NBRC 15573 / CFN 42) protein is UPF0173 metal-dependent hydrolase RHE_CH01853.